Reading from the N-terminus, the 861-residue chain is Glucans biosynthesis glucosyltransferase H (861 aa).

Helical transmembrane passes span 142 to 162, 188 to 208, 516 to 536, 573 to 593, 600 to 620, and 683 to 703; these read FILLLLMLAQTSVATYYMKGI, VLPYVIQFGILALFAILFCWV, VFLTGVMSYLSAPLWFFFLVL, LFSTTLTLLFLPKLLSVMLIW, FGGVIRVTLSMLLEMFFSVLL, and FLWWLSPIVGSLILSIPVSVI.

Belongs to the glycosyltransferase 2 family. OpgH subfamily.

The protein resides in the cell inner membrane. The protein operates within glycan metabolism; osmoregulated periplasmic glucan (OPG) biosynthesis. Involved in the biosynthesis of osmoregulated periplasmic glucans (OPGs). The sequence is that of Glucans biosynthesis glucosyltransferase H from Pseudomonas aeruginosa (strain UCBPP-PA14).